A 397-amino-acid chain; its full sequence is Phosphoglycerate kinase (397 aa).

Residues 25–27 (DLN), R41, 64–67 (HLGR), R118, and R151 each bind substrate. Residues K202, E324, and 350–353 (GGDT) contribute to the ATP site.

This sequence belongs to the phosphoglycerate kinase family. Monomer.

It is found in the cytoplasm. The enzyme catalyses (2R)-3-phosphoglycerate + ATP = (2R)-3-phospho-glyceroyl phosphate + ADP. Its pathway is carbohydrate degradation; glycolysis; pyruvate from D-glyceraldehyde 3-phosphate: step 2/5. This chain is Phosphoglycerate kinase, found in Herminiimonas arsenicoxydans.